A 393-amino-acid chain; its full sequence is Ribonucleoside-diphosphate reductase subunit M2 (393 aa).

Serine 18 carries the phosphoserine modification. Residues aspartate 142, glutamate 173, and histidine 176 each contribute to the Fe cation site. The active site involves tyrosine 180. Fe cation is bound by residues glutamate 236, glutamate 270, and histidine 273.

The protein belongs to the ribonucleoside diphosphate reductase small chain family. Heterodimer of a large and a small subunit. Fe cation is required as a cofactor.

The protein resides in the cytoplasm. The catalysed reaction is a 2'-deoxyribonucleoside 5'-diphosphate + [thioredoxin]-disulfide + H2O = a ribonucleoside 5'-diphosphate + [thioredoxin]-dithiol. In terms of biological role, provides the precursors necessary for DNA synthesis. Catalyzes the biosynthesis of deoxyribonucleotides from the corresponding ribonucleotides. The protein is Ribonucleoside-diphosphate reductase subunit M2 (RnrS) of Drosophila melanogaster (Fruit fly).